A 616-amino-acid polypeptide reads, in one-letter code: Chaperone protein HscA (616 aa).

The protein belongs to the heat shock protein 70 family.

Functionally, chaperone involved in the maturation of iron-sulfur cluster-containing proteins. Has a low intrinsic ATPase activity which is markedly stimulated by HscB. Involved in the maturation of IscU. The chain is Chaperone protein HscA from Escherichia fergusonii (strain ATCC 35469 / DSM 13698 / CCUG 18766 / IAM 14443 / JCM 21226 / LMG 7866 / NBRC 102419 / NCTC 12128 / CDC 0568-73).